A 111-amino-acid polypeptide reads, in one-letter code: Probable 4-amino-4-deoxy-L-arabinose-phosphoundecaprenol flippase subunit ArnE (111 aa).

A run of 3 helical transmembrane segments spans residues 38–58 (LWLG…LLVL), 61–81 (LPVG…TLAA), and 91–111 (PRHW…GSAA). In terms of domain architecture, EamA spans 40–109 (LGLALICMGA…IISGIIILGS (70 aa)).

Belongs to the ArnE family. As to quaternary structure, heterodimer of ArnE and ArnF.

Its subcellular location is the cell inner membrane. It participates in bacterial outer membrane biogenesis; lipopolysaccharide biosynthesis. Translocates 4-amino-4-deoxy-L-arabinose-phosphoundecaprenol (alpha-L-Ara4N-phosphoundecaprenol) from the cytoplasmic to the periplasmic side of the inner membrane. This Salmonella choleraesuis (strain SC-B67) protein is Probable 4-amino-4-deoxy-L-arabinose-phosphoundecaprenol flippase subunit ArnE.